The primary structure comprises 274 residues: Putative hydro-lyase Veis_4744 (274 aa).

Belongs to the D-glutamate cyclase family.

The chain is Putative hydro-lyase Veis_4744 from Verminephrobacter eiseniae (strain EF01-2).